We begin with the raw amino-acid sequence, 247 residues long: ATP synthase subunit a, chloroplastic (247 aa).

Transmembrane regions (helical) follow at residues 36–56, 95–115, 134–154, 199–219, and 220–240; these read GQVL…SIFG, VPFI…GALV, INTT…AGFS, LVVG…LMLL, and GLFT…AYIG.

This sequence belongs to the ATPase A chain family. In terms of assembly, F-type ATPases have 2 components, CF(1) - the catalytic core - and CF(0) - the membrane proton channel. CF(1) has five subunits: alpha(3), beta(3), gamma(1), delta(1), epsilon(1). CF(0) has four main subunits: a, b, b' and c.

It localises to the plastid. The protein resides in the chloroplast thylakoid membrane. In terms of biological role, key component of the proton channel; it plays a direct role in the translocation of protons across the membrane. The protein is ATP synthase subunit a, chloroplastic of Mesostigma viride (Green alga).